The primary structure comprises 172 residues: Adenine phosphoribosyltransferase (172 aa).

It belongs to the purine/pyrimidine phosphoribosyltransferase family. In terms of assembly, homodimer.

The protein resides in the cytoplasm. The catalysed reaction is AMP + diphosphate = 5-phospho-alpha-D-ribose 1-diphosphate + adenine. It participates in purine metabolism; AMP biosynthesis via salvage pathway; AMP from adenine: step 1/1. Functionally, catalyzes a salvage reaction resulting in the formation of AMP, that is energically less costly than de novo synthesis. The sequence is that of Adenine phosphoribosyltransferase from Polynucleobacter necessarius subsp. necessarius (strain STIR1).